We begin with the raw amino-acid sequence, 261 residues long: Oligodendrocyte transcription factor 1 (261 aa).

The segment at 41-105 is disordered; sequence PPISSSSSTS…LRRKINSRER (65 aa). Residues 44–56 are compositionally biased toward low complexity; sequence SSSSSTSSSSTAS. Residues 95 to 154 form the bHLH domain; sequence QLRRKINSRERKRMQDLNLAMDALREVILPYSAAHCQGAPGRKLSKIATLLLARNYILLL.

As to expression, expressed specifically in the brain, including the corpus callosum, hippocampal and cerebral white matter. Also detected in cells scattered in gray matter, most probably in oligodendrocytes.

It localises to the nucleus. Promotes formation and maturation of oligodendrocytes, especially within the brain. Cooperates with OLIG2 to establish the pMN domain of the embryonic neural tube. In Rattus norvegicus (Rat), this protein is Oligodendrocyte transcription factor 1 (Olig1).